The following is a 554-amino-acid chain: (Z)-gamma-bisabolene synthase 2 (554 aa).

The Mg(2+) site is built by D306, D310, D450, and D458. The short motif at 306-310 (DDACD) is the DDXXD motif element.

This sequence belongs to the terpene synthase family. Tpsa subfamily. The cofactor is Mg(2+). Requires Mn(2+) as cofactor. In terms of tissue distribution, predominantly expressed in roots. Expressed in the cortex and the sub-epidermal layers of roots. Also detected in leaf hydathodes and flower stigmata.

It is found in the cytoplasm. It catalyses the reaction (2E,6E)-farnesyl diphosphate = (Z)-gamma-bisabolene + diphosphate. Its pathway is secondary metabolite biosynthesis; terpenoid biosynthesis. Its function is as follows. Involved in sesquiterpene (C15) biosynthesis. The major product is (Z)-gamma-bisabolene with minor amounts of (E)-nerolidol and alpha-bisabolol. In Arabidopsis thaliana (Mouse-ear cress), this protein is (Z)-gamma-bisabolene synthase 2 (TPS13).